Consider the following 973-residue polypeptide: MAGRVPSLLVLLVFPSSCLAFRSPLSVFKRFKETTRPFSNECLGTTRPVVPIDSSDFALDIRMPGVTPKQSDTYFCMSMRIPVDEEAFVIDFKPRASMDTVHHMLLFGCNMPSSTGSYWFCDEGTCTDKANILYAWARNAPPTRLPKGVGFRVGGETGSKYFVLQVHYGDISAFRDNNKDCSGVSLHLTRLPQPLIAGMYLMMSVDTVIPAGEKVVNSDISCHYKNYPMHVFAYRVHTHHLGKVVSGYRVRNGQWTLIGRQSPQLPQAFYPVGHPVDVSFGDLLAARCVFTGEGRTEATHIGGTSSDEMCNLYIMYYMEAKHAVSFMTCTQNVAPDMFRTIPPEANIPIPVKSDMVMMHEHHKETEYKDKIPLLQQPKREEEEVLDQGDFYSLLSKLLGEREDVVHVHKYNPTEKAESESDLVAEIANVVQKKDLGRSDAREGAEHERGNAILVRDRIHKFHRLVSTLRPPESRVFSLQQPPPGEGTWEPEHTGDFHMEEALDWPGVYLLPGQVSGVALDPKNNLVIFHRGDHVWDGNSFDSKFVYQQIGLGPIEEDTILVIDPNNAAVLQSSGKNLFYLPHGLSIDKDGNYWVTDVALHQVFKLDPNNKEGPVLILGRSMQPGSDQNHFCQPTDVAVDPGTGAIYVSDGYCNSRIVQFSPSGKFITQWGEESSGSSPLPGQFTVPHSLALVPLLGQLCVADRENGRIQCFKTDTKEFVREIKHSSFGRNVFAISYIPGLLFAVNGKPHFGDQEPVQGFVMNFSNGEIIDIFKPVRKHFDMPHDIVASEDGTVYIGDAHTNTVWKFTLTEKLEHRSVKKAGIEVQEIKEAEAVVETKMENKPTSSELQKMQEKQKLIKEPGSGVPVVLITTLLVIPVVVLLAIAIFIRWKKSRAFGDSEHKLETSSGRVLGRFRGKGSGGLNLGNFFASRKGYSRKGFDRLSTEGSDQEKEDDGSESEEEYSAPLPALAPSSS.

Positions 1–20 (MAGRVPSLLVLLVFPSSCLA) are cleaved as a signal peptide. A peptidylglycine alpha-hydroxylating monooxygenase region spans residues 1–494 (MAGRVPSLLV…EGTWEPEHTG (494 aa)). Positions 21–30 (FRSPLSVFKR) are excised as a propeptide. Topologically, residues 31–863 (FKETTRPFSN…QKLIKEPGSG (833 aa)) are intragranular. Cystine bridges form between cysteine 42–cysteine 181, cysteine 76–cysteine 121, cysteine 109–cysteine 126, cysteine 222–cysteine 329, and cysteine 288–cysteine 310. Cu(2+) is bound by residues histidine 102 and histidine 103. Cu(2+) contacts are provided by histidine 167, histidine 237, histidine 239, and methionine 309. The tract at residues 495 to 817 (DFHMEEALDW…LTEKLEHRSV (323 aa)) is peptidyl-alpha-hydroxyglycine alpha-amidating lyase. NHL repeat units follow at residues 498–541 (MEEA…NSFD), 567–608 (AAVL…LDPN), 617–662 (LGRS…FSPS), and 670–714 (GEES…FKTD). Residue valine 517 participates in Ca(2+) binding. Arginine 530 is an a protein binding site. Histidine 582 serves as a coordination point for Zn(2+). Leucine 584 serves as a coordination point for Ca(2+). Cysteines 631 and 652 form a disulfide. Tyrosine 651 provides a ligand contact to a protein. Residue histidine 687 coordinates Zn(2+). Cysteines 699 and 710 form a disulfide. Residue arginine 703 coordinates a protein. Asparagine 762 carries an N-linked (GlcNAc...) asparagine glycan. One copy of the NHL 5 repeat lies at 766-809 (GEIIDIFKPVRKHFDMPHDIVASEDGTVYIGDAHTNTVWKFTLT). Zn(2+) is bound at residue histidine 783. Aspartate 784 is a Ca(2+) binding site. Residues 864–887 (VPVVLITTLLVIPVVVLLAIAIFI) traverse the membrane as a helical segment. 2 positions are modified to sulfotyrosine: isoleucine 875 and arginine 893. The Cytoplasmic segment spans residues 888 to 973 (RWKKSRAFGD…PLPALAPSSS (86 aa)). 3 positions are modified to phosphoserine: serine 918, serine 929, and serine 942. An interaction with RASSF9 region spans residues 925–942 (NFFASRKGYSRKGFDRLS). Residues 937–973 (GFDRLSTEGSDQEKEDDGSESEEEYSAPLPALAPSSS) are disordered. Threonine 943 bears the Phosphothreonine mark. Phosphoserine; by UHMK1; in vitro is present on serine 946. A compositionally biased stretch (acidic residues) spans 949-961 (EKEDDGSESEEEY). Serine 957 carries the phosphoserine modification. The segment covering 962–973 (SAPLPALAPSSS) has biased composition (low complexity).

This sequence in the C-terminal section; belongs to the peptidyl-alpha-hydroxyglycine alpha-amidating lyase family. The protein in the N-terminal section; belongs to the copper type II ascorbate-dependent monooxygenase family. Monomer. Interacts with RASSF9. Requires Zn(2+) as cofactor. It depends on Cu(2+) as a cofactor.

The protein localises to the cytoplasmic vesicle. It localises to the secretory vesicle membrane. The protein resides in the membrane. It is found in the secreted. The catalysed reaction is a [peptide]-C-terminal glycine + 2 L-ascorbate + O2 = a [peptide]-C-terminal (2S)-2-hydroxyglycine + 2 monodehydro-L-ascorbate radical + H2O. The enzyme catalyses a [peptide]-C-terminal (2S)-2-hydroxyglycine = a [peptide]-C-terminal amide + glyoxylate. It catalyses the reaction N-dodecanoylglycine + 2 L-ascorbate + O2 = N-dodecanoyl-(2S)-hydroxyglycine + 2 monodehydro-L-ascorbate radical + H2O. It carries out the reaction N-dodecanoyl-(2S)-hydroxyglycine = dodecanamide + glyoxylate. The catalysed reaction is N-(9Z,12Z,15Z)-octadecatrienoylglycine + 2 L-ascorbate + O2 = N-(9Z,12Z,15Z)-octadecatrienoyl-(2S)-hydroxyglycine + 2 monodehydro-L-ascorbate radical + H2O. The enzyme catalyses N-(9Z,12Z,15Z)-octadecatrienoyl-(2S)-hydroxyglycine = (9Z,12Z,15Z)-octadecatrienamide + glyoxylate. It catalyses the reaction N-(9Z-octadecenoyl)glycine + 2 L-ascorbate + O2 = N-(9Z-octadecenoyl)-(2S)-hydroxyglycine + 2 monodehydro-L-ascorbate radical + H2O. It carries out the reaction N-(9Z-octadecenoyl)-(2S)-hydroxyglycine = (9Z)-octadecenamide + glyoxylate. The catalysed reaction is N-tetradecanoylglycine + 2 L-ascorbate + O2 = N-tetradecanoyl-(2S)-hydroxyglycine + 2 monodehydro-L-ascorbate radical + H2O. The enzyme catalyses N-tetradecanoyl-(2S)-hydroxyglycine = tetradecamide + glyoxylate. It catalyses the reaction N-decanoylglycine + 2 L-ascorbate + O2 = N-decanoyl-(2S)-hydroxyglycine + 2 monodehydro-L-ascorbate radical + H2O. It carries out the reaction N-decanoyl-(2S)-hydroxyglycine = decanamide + glyoxylate. The catalysed reaction is N-octanoylglycine + 2 L-ascorbate + O2 = N-octanoyl-(2S)-hydroxyglycine + 2 monodehydro-L-ascorbate radical + H2O. The enzyme catalyses N-octanoyl-(2S)-hydroxyglycine = octanamide + glyoxylate. PAM activity is inhibited by EDTA, phenylglyoxal and diethyl pyrocarbonate. PAL activity is stimulated by cadmium and inhibited by mercury. Bifunctional enzyme that catalyzes amidation of the C-terminus of proteins. Alpha-amidation is present at the C-terminus of many endocrine hormones and neuropeptides and is required for their activity. C-terminal amidation also takes place in response to protein fragmentation triggered by oxidative stress, promoting degradation of amidated protein fragments by the proteasome. Alpha-amidation involves two sequential reactions, both of which are catalyzed by separate catalytic domains of the enzyme. The first step, catalyzed by peptidyl alpha-hydroxylating monooxygenase (PHM) domain, is the copper-, ascorbate-, and O2- dependent stereospecific hydroxylation (with S stereochemistry) at the alpha-carbon (C-alpha) of the C-terminal glycine of the peptidylglycine substrate. The second step, catalyzed by the peptidylglycine amidoglycolate lyase (PAL) domain, is the zinc-dependent cleavage of the N-C-alpha bond, producing the alpha-amidated peptide and glyoxylate. Similarly, catalyzes the two-step conversion of an N-fatty acylglycine to a primary fatty acid amide and glyoxylate. The protein is Peptidyl-glycine alpha-amidating monooxygenase of Homo sapiens (Human).